Reading from the N-terminus, the 827-residue chain is Rho GTPase-activating protein 6 (827 aa).

One can recognise a PH domain in the interval 18 to 125 (TVYKSGPLFI…WKAALEQALA (108 aa)). Residues 172 to 371 (LALEEIDGSP…ALLEDYGNMI (200 aa)) form the Rho-GAP domain. Disordered regions lie at residues 379–437 (CSTS…SDYA) and 517–561 (YTTS…SSGN). Positions 401–412 (IVVKHPDLHTLD) are enriched in basic and acidic residues. Residues 413-423 (IEEGETDDDND) show a composition bias toward acidic residues. Positions 517 to 543 (YTTSAEKPASKTTGSSTVNSKRSSSWG) are enriched in polar residues. Residues 560–684 (GNDELLIQRL…HQLSQQRQHH (125 aa)) adopt a coiled-coil conformation.

Its function is as follows. Acts as a GTPase activator for the Rac-type GTPase by converting it to an inactive GDP-bound state. The protein is Rho GTPase-activating protein 6 (ROPGAP6) of Arabidopsis thaliana (Mouse-ear cress).